The following is a 310-amino-acid chain: Tagatose-6-phosphate kinase (310 aa).

This sequence belongs to the carbohydrate kinase PfkB family. LacC subfamily.

The catalysed reaction is D-tagatofuranose 6-phosphate + ATP = D-tagatofuranose 1,6-bisphosphate + ADP + H(+). The protein operates within carbohydrate metabolism; D-tagatose 6-phosphate degradation; D-glyceraldehyde 3-phosphate and glycerone phosphate from D-tagatose 6-phosphate: step 1/2. This is Tagatose-6-phosphate kinase from Streptococcus mutans serotype c (strain ATCC 700610 / UA159).